Consider the following 504-residue polypeptide: Probable periplasmic serine endoprotease DegP-like (504 aa).

The first 26 residues, 1–26 (MLKTTTVAGLAAVLLTTGLPAEVAQS), serve as a signal peptide directing secretion. Positions 102–118 (RADRWRDRRGPRGEGRL) are enriched in basic and acidic residues. Positions 102–122 (RADRWRDRRGPRGEGRLRPRA) are disordered. A serine protease region spans residues 113–286 (RGEGRLRPRA…PASVAKDVVD (174 aa)). Active-site charge relay system residues include His140, Asp170, and Ser244. Substrate-binding positions include 242-244 (GNS) and 299-303 (LGVQI). 2 PDZ domains span residues 287–378 (SLIK…LWRS) and 401–491 (ATGE…IEAQ). Disordered stretches follow at residues 389–411 (GTLP…DEGQ) and 428–447 (EDGK…AGDR).

It belongs to the peptidase S1C family.

It is found in the periplasm. The catalysed reaction is Acts on substrates that are at least partially unfolded. The cleavage site P1 residue is normally between a pair of hydrophobic residues, such as Val-|-Val.. Might be efficient in the degradation of transiently denatured and unfolded proteins which accumulate in the periplasm following stress conditions. This Rhizobium meliloti (strain 1021) (Ensifer meliloti) protein is Probable periplasmic serine endoprotease DegP-like (degP1).